The chain runs to 100 residues: Small ribosomal subunit protein uS14 (100 aa).

This sequence belongs to the universal ribosomal protein uS14 family. In terms of assembly, part of the 30S ribosomal subunit. Contacts proteins S3 and S10.

Its function is as follows. Binds 16S rRNA, required for the assembly of 30S particles and may also be responsible for determining the conformation of the 16S rRNA at the A site. The sequence is that of Small ribosomal subunit protein uS14 from Nostoc sp. (strain PCC 7120 / SAG 25.82 / UTEX 2576).